A 624-amino-acid polypeptide reads, in one-letter code: MENLGDKLSISQVYHLAQEYRDHAYSIANKIGSEEGLKQYYGLMNMSIQMFQLLKTKCTLSVLEDSKVTFEMVELLIQETYNFDLAELYISSLKERLQTHQSDTDLVEEIMRCEFLLLHDLPLMRDSKFHYKIALRNCNELVQYMVNLQDELYQNWASVFQYVGVMLCIKLKQHRRVKTSFHGLLSQCREKSQWKWFLNLCYVNYLLNERFPIPEDALQELRSTELHTVGPELYAWKLALEMVIQLCKDGNITDHLNEFKNFFDTNKQSLVTNEGKGCVIKIMPRIALKVELPMIFHYKELKNILLLLQSVSYIVNCYDEKGNFSRKFLPKVYSTTQKLIKNIAAGGVSMNELDSRIQTYKSILEFCEFYKVWEQTLLKGAVVTTESPKLGPSPGYVRLLQAMKVQFEGGGAVEEYTRLAQSGGTSSEVKMISLLNCYTVQAARVSRCSGDKQGELVEQCNKVWLQVEKLLQETDLQFNPIWECTVTILWLFSHFEPFSWNPLPCSDKQRAEYVSKLREFYSSNKFVAGEAVADNRFKLKKALLLQILVNYLGGRMLEHDLGEIYAISAKCFDMCRQQGGMRKVQYVIGIWHLMNCTVAMRGKDVALTNAKLEALVKQITSVKQ.

It belongs to the SCC4/mau-2 family. Interacts with SCC2 to form the cohesin loading complex.

The protein resides in the nucleus. Its function is as follows. Involved in sister chromatid cohesion. Forms a complex with SCC2, which is required for the association of the cohesin complex with chromosomes. Binds to the nucleosome-free promoter regions of ribosomal protein genes and tRNA genes. This chain is MAU2 chromatid cohesion factor homolog (SCC4), found in Saccharomyces cerevisiae (strain ATCC 204508 / S288c) (Baker's yeast).